The chain runs to 262 residues: Transcription factor Adf-1 (262 aa).

The MADF DNA-binding region spans 24 to 104; sequence NLIEAVKLNP…QMQFLVDSIR (81 aa). The region spanning 217 to 256 is the BESS domain; that stretch reads SAEDQSFGMVVTDMLNTLGVRQKAEAKVHIIKYLTDMQLL.

Post-translationally, O-glycosylated; contains N-acetylglucosamine side chains.

The protein localises to the nucleus. May play an important role not only in the regulation of Adh expression but also in the transcription of other genes. The protein is Transcription factor Adf-1 (Adf1) of Drosophila melanogaster (Fruit fly).